A 932-amino-acid chain; its full sequence is Protocadherin gamma-A7 (932 aa).

Positions Met-1–Ala-28 are cleaved as a signal peptide. 6 Cadherin domains span residues Gly-29 to Phe-133, Leu-134 to Phe-242, Ser-243 to Val-347, Thr-348 to Phe-452, Pro-453 to Ile-562, and Asp-570 to Asp-682. Topologically, residues Gly-29–Tyr-692 are extracellular. N-linked (GlcNAc...) asparagine glycans are attached at residues Asn-419 and Asn-545. Residues Leu-693 to Ala-713 form a helical membrane-spanning segment. Residues Leu-714 to Lys-932 are Cytoplasmic-facing. 2 disordered regions span residues Val-804–Asn-841 and Ala-902–Lys-932. Positions Ser-806–Asn-841 are enriched in polar residues. Positions Asn-922–Lys-932 are enriched in basic residues.

The protein resides in the cell membrane. Potential calcium-dependent cell-adhesion protein. May be involved in the establishment and maintenance of specific neuronal connections in the brain. The chain is Protocadherin gamma-A7 (PCDHGA7) from Pan troglodytes (Chimpanzee).